A 208-amino-acid polypeptide reads, in one-letter code: Large ribosomal subunit protein bL25 (208 aa).

The segment at 188–208 is disordered; that stretch reads AVETETEEETTTGESPAQPAE.

This sequence belongs to the bacterial ribosomal protein bL25 family. CTC subfamily. As to quaternary structure, part of the 50S ribosomal subunit; part of the 5S rRNA/L5/L18/L25 subcomplex. Contacts the 5S rRNA. Binds to the 5S rRNA independently of L5 and L18.

This is one of the proteins that binds to the 5S RNA in the ribosome where it forms part of the central protuberance. The protein is Large ribosomal subunit protein bL25 of Moorella thermoacetica (strain ATCC 39073 / JCM 9320).